Reading from the N-terminus, the 207-residue chain is Ras-related protein Rab7A (207 aa).

Residues 15-22 (GDSGVGKT), 63-67 (DTAGQ), and 125-128 (NKID) contribute to the GTP site. Residues Cys205 and Cys207 are each lipidated (S-geranylgeranyl cysteine). Position 207 is a cysteine methyl ester (Cys207).

Belongs to the small GTPase superfamily. Rab family.

The protein resides in the cell membrane. In terms of biological role, protein transport. Probably involved in vesicular traffic. The chain is Ras-related protein Rab7A from Mesembryanthemum crystallinum (Common ice plant).